We begin with the raw amino-acid sequence, 349 residues long: Nicotinate-nucleotide--dimethylbenzimidazole phosphoribosyltransferase (349 aa).

Residue E315 is the Proton acceptor of the active site.

It belongs to the CobT family.

It catalyses the reaction 5,6-dimethylbenzimidazole + nicotinate beta-D-ribonucleotide = alpha-ribazole 5'-phosphate + nicotinate + H(+). It functions in the pathway nucleoside biosynthesis; alpha-ribazole biosynthesis; alpha-ribazole from 5,6-dimethylbenzimidazole: step 1/2. In terms of biological role, catalyzes the synthesis of alpha-ribazole-5'-phosphate from nicotinate mononucleotide (NAMN) and 5,6-dimethylbenzimidazole (DMB). In Variovorax paradoxus (strain S110), this protein is Nicotinate-nucleotide--dimethylbenzimidazole phosphoribosyltransferase.